The sequence spans 270 residues: Phosphatidylglycerol--prolipoprotein diacylglyceryl transferase (270 aa).

Helical transmembrane passes span 19-39, 56-76, 92-112, and 116-136; these read FPVY…LWLA, LVLI…VIFE, QGGL…VLFA, and GVSF…GQAI. Arg-138 provides a ligand contact to a 1,2-diacyl-sn-glycero-3-phospho-(1'-sn-glycerol). 3 helical membrane passes run 178-198, 206-226, and 236-256; these read HPTF…LLAL, GELF…VEGL, and LRIA…FIIV.

Belongs to the Lgt family.

The protein resides in the cell membrane. The catalysed reaction is L-cysteinyl-[prolipoprotein] + a 1,2-diacyl-sn-glycero-3-phospho-(1'-sn-glycerol) = an S-1,2-diacyl-sn-glyceryl-L-cysteinyl-[prolipoprotein] + sn-glycerol 1-phosphate + H(+). It functions in the pathway protein modification; lipoprotein biosynthesis (diacylglyceryl transfer). Catalyzes the transfer of the diacylglyceryl group from phosphatidylglycerol to the sulfhydryl group of the N-terminal cysteine of a prolipoprotein, the first step in the formation of mature lipoproteins. The protein is Phosphatidylglycerol--prolipoprotein diacylglyceryl transferase of Bacillus cereus (strain B4264).